Here is a 529-residue protein sequence, read N- to C-terminus: Endoglucanase 21 (529 aa).

The N-terminal stretch at 1-24 (MVAAMTMCAAVAVLLVLTSTMAAA) is a signal peptide. The active-site Nucleophile is the Asp-89. The N-linked (GlcNAc...) asparagine glycan is linked to Asn-342. Catalysis depends on residues His-429, Asp-481, and Glu-490.

Belongs to the glycosyl hydrolase 9 (cellulase E) family. As to expression, expressed in roots and flowers.

It localises to the secreted. It carries out the reaction Endohydrolysis of (1-&gt;4)-beta-D-glucosidic linkages in cellulose, lichenin and cereal beta-D-glucans.. The sequence is that of Endoglucanase 21 (GLU9) from Oryza sativa subsp. japonica (Rice).